A 502-amino-acid polypeptide reads, in one-letter code: Lysine--tRNA ligase (502 aa).

Mg(2+) contacts are provided by Glu-412 and Glu-419.

This sequence belongs to the class-II aminoacyl-tRNA synthetase family. As to quaternary structure, homodimer. It depends on Mg(2+) as a cofactor.

The protein localises to the cytoplasm. The catalysed reaction is tRNA(Lys) + L-lysine + ATP = L-lysyl-tRNA(Lys) + AMP + diphosphate. The chain is Lysine--tRNA ligase from Histophilus somni (strain 2336) (Haemophilus somnus).